The following is a 335-amino-acid chain: Glyceraldehyde-3-phosphate dehydrogenase, cytosolic (335 aa).

NAD(+) contacts are provided by residues 13–14 (RI), Asp35, and Arg80. D-glyceraldehyde 3-phosphate contacts are provided by residues 151 to 153 (SCT), Thr182, 211 to 212 (TG), and Arg234. Cys152 acts as the Nucleophile in catalysis. Asn316 lines the NAD(+) pocket.

It belongs to the glyceraldehyde-3-phosphate dehydrogenase family. As to quaternary structure, homotetramer.

Its subcellular location is the cytoplasm. It carries out the reaction D-glyceraldehyde 3-phosphate + phosphate + NAD(+) = (2R)-3-phospho-glyceroyl phosphate + NADH + H(+). The protein operates within carbohydrate degradation; glycolysis; pyruvate from D-glyceraldehyde 3-phosphate: step 1/5. This is Glyceraldehyde-3-phosphate dehydrogenase, cytosolic (GAPC) from Gracilaria gracilis (Red alga).